Reading from the N-terminus, the 39-residue chain is Natriuretic peptide TcNPa (39 aa).

Residues 1–8 (SGSETAKI) constitute a propeptide that is removed on maturation. A disulfide bond links cysteine 12 and cysteine 28. O-linked (GalNAc...) threonine glycosylation is present at threonine 35.

This sequence belongs to the natriuretic peptide family. O-linked glycans consist of galactosyl-beta(1-3)-N-acetylgalactosamine (Gal-GalNAc). Post-translationally, the synthetic non-glycosylated form shows higher potency on natriuretic receptors (EC(50)=672.90 nM) and NPR2 (EC(50)=261.0 nM). As to expression, expressed by the venom gland.

The protein localises to the secreted. In terms of biological role, snake venom natriuretic peptide that targets both NPR1 (EC(50)=1080.0 nM) and NPR2 (EC(50)=328.60 nM). Exhibits hypotensive and vasodepressor activities. The polypeptide is Natriuretic peptide TcNPa (Tropidechis carinatus (Australian rough-scaled snake)).